Consider the following 397-residue polypeptide: Growth-regulating factor 1 (397 aa).

In terms of domain architecture, QLQ spans 18–53 (PFTASQWQELEHQALIYKYMASGTPIPSDLILPLRR). Short sequence motifs (bipartite nuclear localization signal) lie at residues 86–105 (RKAEDPEPGRCRRTDGKKWR) and 123–130 (RGKNRSRK). A WRC domain is found at 90–134 (DPEPGRCRRTDGKKWRCSKEAYPDSKYCEKHMHRGKNRSRKPVEM). Residues 117-176 (CEKHMHRGKNRSRKPVEMSLATPPPPSSSATSAASNTSAGVAPTTTTTSSPAPSYSRPAP) form a disordered region. Over residues 120-129 (HMHRGKNRSR) the composition is skewed to basic residues. The span at 144–174 (SSATSAASNTSAGVAPTTTTTSSPAPSYSRP) shows a compositional bias: low complexity.

The protein belongs to the GRF family.

It localises to the nucleus. Functionally, transcription activator that plays a regulatory role in gibberellin-induced stem elongation. The polypeptide is Growth-regulating factor 1 (GRF1) (Oryza sativa subsp. japonica (Rice)).